The chain runs to 349 residues: Ribosomal RNA large subunit methyltransferase M (349 aa).

Residues 216–219 (APGG), aspartate 235, aspartate 255, and aspartate 271 each bind S-adenosyl-L-methionine. Residue lysine 300 is the Proton acceptor of the active site.

The protein belongs to the class I-like SAM-binding methyltransferase superfamily. RNA methyltransferase RlmE family. RlmM subfamily. As to quaternary structure, monomer.

The protein resides in the cytoplasm. The enzyme catalyses cytidine(2498) in 23S rRNA + S-adenosyl-L-methionine = 2'-O-methylcytidine(2498) in 23S rRNA + S-adenosyl-L-homocysteine + H(+). In terms of biological role, catalyzes the 2'-O-methylation at nucleotide C2498 in 23S rRNA. This is Ribosomal RNA large subunit methyltransferase M from Saccharophagus degradans (strain 2-40 / ATCC 43961 / DSM 17024).